Reading from the N-terminus, the 212-residue chain is Octanoyltransferase (212 aa).

The BPL/LPL catalytic domain maps to 34-208; it reads GQRQDTLILL…AFERQFNARC (175 aa). Residues 72–79, 139–141, and 152–154 contribute to the substrate site; these read RGGQVTYH, SIG, and GLS. The active-site Acyl-thioester intermediate is cysteine 170.

It belongs to the LipB family.

It localises to the cytoplasm. It catalyses the reaction octanoyl-[ACP] + L-lysyl-[protein] = N(6)-octanoyl-L-lysyl-[protein] + holo-[ACP] + H(+). It participates in protein modification; protein lipoylation via endogenous pathway; protein N(6)-(lipoyl)lysine from octanoyl-[acyl-carrier-protein]: step 1/2. Catalyzes the transfer of endogenously produced octanoic acid from octanoyl-acyl-carrier-protein onto the lipoyl domains of lipoate-dependent enzymes. Lipoyl-ACP can also act as a substrate although octanoyl-ACP is likely to be the physiological substrate. This Magnetococcus marinus (strain ATCC BAA-1437 / JCM 17883 / MC-1) protein is Octanoyltransferase.